The following is a 670-amino-acid chain: Probable metal-nicotianamine transporter YSL4 (670 aa).

The next 13 membrane-spanning stretches (helical) occupy residues 35-55 (ITIR…IITH), 59-79 (LTIG…FFFI), 107-127 (CVVS…LIAM), 151-171 (GLWW…FCLV), 273-293 (LVNC…WPFI), 318-338 (VFIA…KIIV), 389-409 (FAVS…PLIF), 416-436 (FVLC…YGAG), 450-470 (GLFI…GLAA), 507-527 (LGTA…WTAF), 559-579 (PKHC…VNLI), 601-621 (FYIG…MLVW), and 636-656 (VASG…ILSI).

Belongs to the YSL (TC 2.A.67.2) family.

The protein localises to the membrane. In terms of biological role, may be involved in the transport of nicotianamine-chelated metals. The sequence is that of Probable metal-nicotianamine transporter YSL4 (YSL4) from Arabidopsis thaliana (Mouse-ear cress).